A 580-amino-acid polypeptide reads, in one-letter code: MLLDDKILDIFGFFRNAIEERIRAVWSGDNIPESLFKRIIVGPPAQPKHGDLYTNAALILGKFDKKNPMELASTLCNAFENIEGIESINVVAPGFINFHCVNSVWHGVVRNINKLGREYGRTDLGHNKKVNIEFVSANPTGPLHIGHARGAVFGDVLSNLLKWVGYDVIKEYYVNDAGSQVKTLVSSVFLRYKEALGEEITIGAGLYPGEYLKPIARDLVEKYGSDLLNASDKDEIIRSFTLSSMLNLIKEDLALLGVEHDVFVSESDLQNRNVIEECVKYLRERGIIYEGVLEKPKREDELSEWQPRVQMLFKSTEFGDDSDRALQKEDGTWSYFAGDIGYHFHKISRGFDSMIMTLGFDHKGYVSRLKAAVAALSNGKASIDIKLYNLVNFLENGTPVKMSKRKGEFLTVRDVIDEVGRDVARFMMLTRRNDVVLDFDFAKAREESKDSQIFYIQYAHARIRSIVRRCPELLAIEKIDFSCVITEQELSLLRLLSRWPSVIKTSAENYEPHTIAFYLIEVAEAFHALWGCGNSDPSMRFIVEGDLHTTSARIYIAIAVSHVIASGLDIFSITPSEEMR.

Residues 137–147 carry the 'HIGH' region motif; that stretch reads ANPTGPLHIGH.

The protein belongs to the class-I aminoacyl-tRNA synthetase family. In terms of assembly, monomer.

The protein localises to the cytoplasm. The enzyme catalyses tRNA(Arg) + L-arginine + ATP = L-arginyl-tRNA(Arg) + AMP + diphosphate. This is Arginine--tRNA ligase from Anaplasma phagocytophilum (strain HZ).